Reading from the N-terminus, the 89-residue chain is Small ribosomal subunit protein uS15 (89 aa).

Belongs to the universal ribosomal protein uS15 family. In terms of assembly, part of the 30S ribosomal subunit. Forms a bridge to the 50S subunit in the 70S ribosome, contacting the 23S rRNA.

Its function is as follows. One of the primary rRNA binding proteins, it binds directly to 16S rRNA where it helps nucleate assembly of the platform of the 30S subunit by binding and bridging several RNA helices of the 16S rRNA. In terms of biological role, forms an intersubunit bridge (bridge B4) with the 23S rRNA of the 50S subunit in the ribosome. In Actinobacillus pleuropneumoniae serotype 5b (strain L20), this protein is Small ribosomal subunit protein uS15.